The chain runs to 1526 residues: Cell wall protein IFF4 (1526 aa).

Positions M1–A20 are cleaved as a signal peptide. 2 N-linked (GlcNAc...) asparagine glycosylation sites follow: N93 and N498. The tract at residues S512–S541 is disordered. Over residues M525–S541 the composition is skewed to polar residues. N637 carries an N-linked (GlcNAc...) asparagine glycan. Residues W1180–A1207 form a disordered region. Positions S1193 to A1207 are enriched in polar residues. 5 N-linked (GlcNAc...) asparagine glycosylation sites follow: N1451, N1463, N1479, N1502, and N1506. A disordered region spans residues S1455–D1483. N1502 is lipidated: GPI-anchor amidated asparagine. The propeptide at G1503 to I1526 is removed in mature form.

It belongs to the HYR1/IFF family. The GPI-anchor is attached to the protein in the endoplasmic reticulum and serves to target the protein to the cell surface. There, the glucosamine-inositol phospholipid moiety is cleaved off and the GPI-$modified mannoprotein is covalently attached via its lipidless GPI glycan remnant to the 1,6-beta-glucan of the outer cell wall layer.

The protein resides in the secreted. It localises to the cell wall. The protein localises to the membrane. Its function is as follows. GPI-anchored cell wall protein involved in cell wall organization, hyphal growth, as well as in host-fungal interaction and virulence. Plays a role in adherence to plastic and to host epithelial cells. Promotes the tissue fungal burden during murine vaginal candidiasis. Also increases susceptibility to neutrophil-mediated killing. Furthermore, contributes to the severity of hematogenously disseminated candidiasis in normal mice, but not in neutropenic mice. The sequence is that of Cell wall protein IFF4 (IFF4) from Candida albicans (strain SC5314 / ATCC MYA-2876) (Yeast).